The sequence spans 142 residues: NADH-quinone oxidoreductase subunit A (142 aa).

The next 3 helical transmembrane spans lie at 8 to 28 (FGTVFVFLLLGIIFVVGGYLT), 63 to 83 (FYVVALIFIIFDVEVVFLFPW), and 93 to 113 (FALIEALVFAGILVIGLVYAW).

Belongs to the complex I subunit 3 family. As to quaternary structure, NDH-1 is composed of 14 different subunits. Subunits NuoA, H, J, K, L, M, N constitute the membrane sector of the complex.

The protein localises to the cell inner membrane. It carries out the reaction a quinone + NADH + 5 H(+)(in) = a quinol + NAD(+) + 4 H(+)(out). Functionally, NDH-1 shuttles electrons from NADH, via FMN and iron-sulfur (Fe-S) centers, to quinones in the respiratory chain. The immediate electron acceptor for the enzyme in this species is believed to be a menaquinone. Couples the redox reaction to proton translocation (for every two electrons transferred, four hydrogen ions are translocated across the cytoplasmic membrane), and thus conserves the redox energy in a proton gradient. In Chlorobium phaeobacteroides (strain BS1), this protein is NADH-quinone oxidoreductase subunit A.